The chain runs to 673 residues: Sodium/myo-inositol cotransporter 2 (673 aa).

Residues 1–27 (MESATISPQPPQSDSLEAFPQKSMEPA) are Extracellular-facing. The helical transmembrane segment at 28-48 (DIAVLVLYFLFVLAVGLWSTV) threads the bilayer. The Cytoplasmic segment spans residues 49–65 (RTKRDTVKGYFLAGGDM). Residues 66 to 88 (VWWPVGASLFASNVGSGHFIGLA) form a helical membrane-spanning segment. The Extracellular portion of the chain corresponds to 89 to 102 (GSGAAVGISVAAYE). A helical membrane pass occupies residues 103-123 (LNGLFSVLMLAWVFLPIYIAG). Residues 124–148 (QVTTMPEYLRRRFGGNRISITLAVL) lie on the Cytoplasmic side of the membrane. A helical transmembrane segment spans residues 149–169 (YLFIYIFTKISVDMYAGAIFI). Topologically, residues 170–180 (QQSLHLDLYLA) are extracellular. The helical transmembrane segment at 181–201 (IVGLLAITALYTVAGGLAAVI) threads the bilayer. Topologically, residues 202–208 (YTDALQT) are cytoplasmic. The helical transmembrane segment at 209–229 (VIMLIGAFILMGYSFAAVGGM) threads the bilayer. The Extracellular portion of the chain corresponds to 230-272 (EGLKDQYFLALASNRSENSSCGLPREDAFHIFRDPLTSDLPWP). A helical membrane pass occupies residues 273-293 (GILFGMSIPSLWYWCTDQVIV). At 294 to 308 (QRSLAAKNLSHAKGG) the chain is on the cytoplasmic side. The chain crosses the membrane as a helical span at residues 309 to 329 (SLMAAYLKVLPLFLMVFPGMV). Residues 330–375 (SRVLFPDQVACAHPDICQRVCSNPSGCSDIAYPKLVLELLPTGLRG) are Extracellular-facing. Residues 376-396 (LMMAVMVAALMSSLTSIFNSA) traverse the membrane as a helical segment. Over 397-418 (STIFTMDLWNHIRPRASERELM) the chain is Cytoplasmic. A helical membrane pass occupies residues 419 to 439 (IVGRIFVFALVLVSILWIPIV). Residues 440–446 (QASQGGQ) are Extracellular-facing. A helical transmembrane segment spans residues 447 to 467 (LFIYIQSISSYLQPPVAMVFI). Residues 468–479 (MGCFWKRTNEKG) are Cytoplasmic-facing. Residues 480 to 500 (AFSGLILGLLLGLVRLILDFV) form a helical membrane-spanning segment. At 501 to 521 (YAQPRCDQPDDRPAVVKDVHY) the chain is on the extracellular side. The helical transmembrane segment at 522–542 (LYFSMILSFTTLITVVTVSWF) threads the bilayer. Residues 543–652 (TETPSKEMVS…SLEENPLVKT (110 aa)) lie on the Cytoplasmic side of the membrane. The helical transmembrane segment at 653-673 (LLDVNCIVCISCAIFLWGYFA) threads the bilayer.

Belongs to the sodium:solute symporter (SSF) (TC 2.A.21) family.

It is found in the membrane. The protein resides in the apical cell membrane. The enzyme catalyses myo-inositol(out) + 2 Na(+)(out) = myo-inositol(in) + 2 Na(+)(in). The catalysed reaction is 1D-chiro-inositol(out) + 2 Na(+)(out) = 1D-chiro-inositol(in) + 2 Na(+)(in). It catalyses the reaction D-glucose(out) + 2 Na(+)(out) = D-glucose(in) + 2 Na(+)(in). It carries out the reaction D-xylose(out) + 2 Na(+)(out) = D-xylose(in) + 2 Na(+)(in). Its activity is regulated as follows. MI transport activity inhibited by D-chiro-inositol (DCI), phlorizin (Pz) and sodium (Na(+)). Insulin increases D-chiro-inositol uptake. Its function is as follows. Involved in the sodium-dependent cotransport of myo-inositol (MI) with a Na(+):MI stoichiometry of 2:1. Exclusively responsible for apical MI transport and absorption in intestine. Can also transport D-chiro-inositol (DCI) but not L-fucose. Exhibits stereospecific cotransport of both D-glucose and D-xylose. May induce apoptosis through the TNF-alpha, PDCD1 pathway. May play a role in the regulation of MI concentration in serum, involving reabsorption in at least the proximal tubule of the kidney. This chain is Sodium/myo-inositol cotransporter 2, found in Mus musculus (Mouse).